The sequence spans 146 residues: Hemoglobin subunit beta (146 aa).

One can recognise a Globin domain in the interval 2-146; that stretch reads HWSAEEKQLI…VAHALARKYH (145 aa). Heme b-binding residues include histidine 63 and histidine 92.

It belongs to the globin family. Heterotetramer of two alpha chains and two beta chains. As to expression, red blood cells.

Its function is as follows. Involved in oxygen transport from the lung to the various peripheral tissues. The protein is Hemoglobin subunit beta (HBB) of Psittacula krameri (Rose-ringed parakeet).